We begin with the raw amino-acid sequence, 722 residues long: Glycine--tRNA ligase beta subunit (722 aa).

This sequence belongs to the class-II aminoacyl-tRNA synthetase family. Tetramer of two alpha and two beta subunits.

It is found in the cytoplasm. It catalyses the reaction tRNA(Gly) + glycine + ATP = glycyl-tRNA(Gly) + AMP + diphosphate. The protein is Glycine--tRNA ligase beta subunit (glyS) of Synechocystis sp. (strain ATCC 27184 / PCC 6803 / Kazusa).